The sequence spans 361 residues: D-alanine--D-alanine ligase (361 aa).

The ATP-grasp domain maps to 140–345; that stretch reads KHLFAQAGLD…YAELIEKLVA (206 aa). 173–228 serves as a coordination point for ATP; the sequence is EGELGYPCFVKPANLGSSVGISKCRSREELDQAFELAFQYDRKIVVEEGVIGREIE. Asp-299, Glu-312, and Asn-314 together coordinate Mg(2+).

Belongs to the D-alanine--D-alanine ligase family. It depends on Mg(2+) as a cofactor. The cofactor is Mn(2+).

Its subcellular location is the cytoplasm. The enzyme catalyses 2 D-alanine + ATP = D-alanyl-D-alanine + ADP + phosphate + H(+). The protein operates within cell wall biogenesis; peptidoglycan biosynthesis. Its function is as follows. Cell wall formation. This is D-alanine--D-alanine ligase from Bacillus licheniformis (strain ATCC 14580 / DSM 13 / JCM 2505 / CCUG 7422 / NBRC 12200 / NCIMB 9375 / NCTC 10341 / NRRL NRS-1264 / Gibson 46).